Here is a 431-residue protein sequence, read N- to C-terminus: Tyrosine--tRNA ligase (431 aa).

Y33 contributes to the L-tyrosine binding site. Positions 38–47 (PTADSLHIGS) match the 'HIGH' region motif. L-tyrosine contacts are provided by Y172 and Q176. The short motif at 234–238 (KFGKS) is the 'KMSKS' region element. K237 is an ATP binding site. The region spanning 364–431 (LDIVTVLNEK…KKNYFVIRVV (68 aa)) is the S4 RNA-binding domain.

This sequence belongs to the class-I aminoacyl-tRNA synthetase family. TyrS type 1 subfamily. Homodimer.

It is found in the cytoplasm. It catalyses the reaction tRNA(Tyr) + L-tyrosine + ATP = L-tyrosyl-tRNA(Tyr) + AMP + diphosphate + H(+). Catalyzes the attachment of tyrosine to tRNA(Tyr) in a two-step reaction: tyrosine is first activated by ATP to form Tyr-AMP and then transferred to the acceptor end of tRNA(Tyr). This Flavobacterium johnsoniae (strain ATCC 17061 / DSM 2064 / JCM 8514 / BCRC 14874 / CCUG 350202 / NBRC 14942 / NCIMB 11054 / UW101) (Cytophaga johnsonae) protein is Tyrosine--tRNA ligase.